Consider the following 223-residue polypeptide: Pyridoxine/pyridoxamine 5'-phosphate oxidase (223 aa).

Substrate-binding positions include 9-12 and K76; that span reads RVGY. FMN is bound by residues 71 to 76, 86 to 87, K93, and Q115; these read RTVLCK and FT. Substrate contacts are provided by Y133, R137, and S141. Residues 150–151 and W196 contribute to the FMN site; that span reads QS. 202–204 is a binding site for substrate; it reads RMH. R206 is a binding site for FMN.

It belongs to the pyridoxamine 5'-phosphate oxidase family. In terms of assembly, homodimer. It depends on FMN as a cofactor.

It carries out the reaction pyridoxamine 5'-phosphate + O2 + H2O = pyridoxal 5'-phosphate + H2O2 + NH4(+). It catalyses the reaction pyridoxine 5'-phosphate + O2 = pyridoxal 5'-phosphate + H2O2. It functions in the pathway cofactor metabolism; pyridoxal 5'-phosphate salvage; pyridoxal 5'-phosphate from pyridoxamine 5'-phosphate: step 1/1. Its pathway is cofactor metabolism; pyridoxal 5'-phosphate salvage; pyridoxal 5'-phosphate from pyridoxine 5'-phosphate: step 1/1. Functionally, catalyzes the oxidation of either pyridoxine 5'-phosphate (PNP) or pyridoxamine 5'-phosphate (PMP) into pyridoxal 5'-phosphate (PLP). In Rhodococcus jostii (strain RHA1), this protein is Pyridoxine/pyridoxamine 5'-phosphate oxidase.